The primary structure comprises 331 residues: Protein PER1 homolog (331 aa).

Residues 1-24 (MRVLRNFTIFFLFTALSLFRQISA) form the signal peptide. Topologically, residues 25–100 (SAGDLHPVYV…QYHGKWYFIR (76 aa)) are lumenal. Residues 101–121 (VFGIQELFSVFFSMLNFMIHY) form a helical membrane-spanning segment. Topologically, residues 122–139 (NGYHIMRRCIPDEHPAKR) are cytoplasmic. A helical transmembrane segment spans residues 140–160 (LCLSWAIVGMNAWVWSSVFHI). Topologically, residues 161–168 (RDTPITEK) are lumenal. A helical membrane pass occupies residues 169-189 (LDYFSAGAFVLFGSYCTLILM). The Cytoplasmic portion of the chain corresponds to 190–199 (LRLDQLPGGK). The chain crosses the membrane as a helical span at residues 200 to 220 (LLCWIIGVIFIAAFIAHVSYL). Residues 221 to 232 (SFYSFDYGYNMK) lie on the Lumenal side of the membrane. Residues 233 to 250 (ANVAVGLVQNILWYYYSW) traverse the membrane as a helical segment. Residues 251–263 (SNRNSGLYWTRWP) lie on the Cytoplasmic side of the membrane. Residues 264–284 (AYIVTSLMLATSLELFDFSPI) traverse the membrane as a helical segment. Over 285–289 (ANLID) the chain is Lumenal. The helical transmembrane segment at 290–310 (AHALWHLSTVPITHYLYGFVV) threads the bilayer. The Cytoplasmic segment spans residues 311–331 (RKCSYDLTKGTFKIKAYDSSR).

This sequence belongs to the PGAP3/PER1 family.

It localises to the endoplasmic reticulum membrane. It is found in the vacuole membrane. Its function is as follows. Involved in the lipid remodeling steps of GPI-anchor maturation. Lipid remodeling steps consist in the generation of 2 saturated fatty chains at the sn-2 position of GPI-anchors proteins. Required for phospholipase A2 activity that removes an acyl-chain at the sn-2 position of GPI-anchors during the remodeling of GPI. Required for efficient transport of GPI-anchor proteins. The chain is Protein PER1 homolog from Schizosaccharomyces pombe (strain 972 / ATCC 24843) (Fission yeast).